Reading from the N-terminus, the 552-residue chain is MATSLTLIATPCTAPRSSSSFALAPRLPPRCSNATAARRRAVRATTLQSDQEPAGSGDSGATTTKLSASTSVRQERWEGDLPIEGCLPPWLNGTYIRNGPGMWDVGEHAFHHLFDGYATLVRVSFRGGGGARATGAHRQIESEAYRAAVARGRPVLREFSHCPAPAKSLLHRFGDLVGLVTGAALTDNPNSAVLPLGDGRVMCLTETTKSSVLIDPDTLETVGRFRYTDRLGGMVQSAHPIVTDTEFLTLLPDLVRPGHLVVRMEAGSNERKVIGRMDCRGGPSPGWLHSFAVTEKYAVVPEMPLRYSSASLLASELAPFYAFDWVPASGSYMHVMCKSTGKTVASVEVPPFMAIHFINAYEEEGDEAAVVVDCCEHYGDPAIIETLVLSRLRLLRGKDVLPNARVGRFRIPLDGSPFGELETALDPEEHGRGMDMCSINPARLGRKYQYAYACGARRPCNFPNTLTKIDLVEKKAKSWHEEGSVPSEPFFVARPGATDEDDGVVISIVSSDDGEGYALVLDATTFEEIARVRFPYGLPYGFHGCWIPATEE.

Residues 1–43 (MATSLTLIATPCTAPRSSSSFALAPRLPPRCSNATAARRRAVR) constitute a chloroplast transit peptide. The segment at 32 to 73 (SNATAARRRAVRATTLQSDQEPAGSGDSGATTTKLSASTSVR) is disordered. Over residues 59-72 (SGATTTKLSASTSV) the composition is skewed to polar residues. Positions 239, 289, 356, and 543 each coordinate Fe cation.

It belongs to the carotenoid oxygenase family. Fe(2+) is required as a cofactor. Highly expressed in panicles, inflorescences and parenchyma cells of the root stele, and at lower levels in shoot apex, leaf buds and xylem parenchyma cells of the stem.

It is found in the plastid. The protein localises to the chloroplast. In terms of biological role, may be involved in strigolactones biosynthesis. In Oryza sativa subsp. japonica (Rice), this protein is Carotenoid cleavage dioxygenase 8 homolog A, chloroplastic (CCD8A).